Consider the following 403-residue polypeptide: Chromatin structure-remodeling complex subunit rsc58 (403 aa).

The span at 376-389 shows a compositional bias: low complexity; the sequence is SLSMNGSLSPSSTN. Residues 376-403 form a disordered region; it reads SLSMNGSLSPSSTNVPLQSYRRTTKSRR. Phosphoserine is present on serine 384.

As to quaternary structure, component of the RSC complex composed of at least arp9, arp42, rsc1, rsc4, rsc7, rsc9, rsc58, sfh1, snf21, ssr1, ssr2, ssr3 and ssr4. The complex interacts with histone and histone variant components of centromeric chromatin.

It localises to the cytoplasm. The protein resides in the nucleus. Component of the chromatin structure remodeling complex (RSC), which is involved in transcription regulation and nucleosome positioning. Controls particularly membrane and organelle development genes. The protein is Chromatin structure-remodeling complex subunit rsc58 (rsc58) of Schizosaccharomyces pombe (strain 972 / ATCC 24843) (Fission yeast).